Here is a 556-residue protein sequence, read N- to C-terminus: Cytochrome P450 monooxygenase polC (556 aa).

Residues 17–37 form a helical membrane-spanning segment; sequence LCFAISLLCAVAIATFLHKLY. Cysteine 479 serves as a coordination point for heme.

The protein belongs to the cytochrome P450 family. Heme serves as cofactor.

Its subcellular location is the membrane. The catalysed reaction is motiol + 3 reduced [NADPH--hemoprotein reductase] + 3 O2 = 4beta-carboxyl motiol + 3 oxidized [NADPH--hemoprotein reductase] + 4 H2O + 4 H(+). It participates in secondary metabolite biosynthesis; terpenoid biosynthesis. In terms of biological role, cytochrome P450 monooxygenase; part of the gene cluster that mediates the biosynthesis of antifungal fernane-type triterpenoid polytolypin. PolC uses motiol as a substrate and converts the methyl group at position C-4 to a carboxyl group. Within the pathway, the triterpene cyclase polA first catalyzes the cyclization of 2,3-oxidosqualene to motiol, polC converts the 4-alpha-methyl group of motiol to a carboxyl group, polB is responsible for appending a hydroxyl group at the 2-alpha position and polE is a dual functional P450, which can catalyze the formation of both the 1-beta-hydroxyl group and 10-beta-carboxyl group. In Polytolypa hystricis (strain UAMH7299), this protein is Cytochrome P450 monooxygenase polC.